A 95-amino-acid polypeptide reads, in one-letter code: Co-chaperonin GroES (95 aa).

Positions 20–45 are disordered; sequence KTKGGLIIPDSAKEKPAEGEITSVGE.

This sequence belongs to the GroES chaperonin family. As to quaternary structure, heptamer of 7 subunits arranged in a ring. Interacts with the chaperonin GroEL.

It is found in the cytoplasm. Functionally, together with the chaperonin GroEL, plays an essential role in assisting protein folding. The GroEL-GroES system forms a nano-cage that allows encapsulation of the non-native substrate proteins and provides a physical environment optimized to promote and accelerate protein folding. GroES binds to the apical surface of the GroEL ring, thereby capping the opening of the GroEL channel. The sequence is that of Co-chaperonin GroES from Paracoccus denitrificans.